The following is an 813-amino-acid chain: Disintegrin and metalloproteinase domain-containing protein 33 (813 aa).

Positions 1–29 (MGWRPRRARGTPLLLLLLLLLLWPVPGAG) are cleaved as a signal peptide. Residues 30–203 (VLQGHIPGQP…PGGPQSRGRR (174 aa)) constitute a propeptide that is removed on maturation. Residues 30-701 (VLQGHIPGQP…GPVQAENHDT (672 aa)) lie on the Extracellular side of the membrane. Residue N109 is glycosylated (N-linked (GlcNAc...) asparagine). The Cysteine switch motif lies at 131 to 138 (CTCSGMSG). A Zn(2+)-binding site is contributed by C133. A glycan (N-linked (GlcNAc...) asparagine) is linked at N145. The interval 184-205 (PGNKAGMTSLPGGPQSRGRREA) is disordered. In terms of domain architecture, Peptidase M12B spans 210–409 (KYLELYIVAD…GGGACLSNAP (200 aa)). N-linked (GlcNAc...) asparagine glycans are attached at residues N231 and N276. 3 disulfide bridges follow: C320/C404, C360/C388, and C361/C371. Zn(2+) is bound at residue H345. E346 is an active-site residue. 2 residues coordinate Zn(2+): H349 and H355. Residues 417–503 (PALCGNGFVE…HCPPDVYLLD (87 aa)) form the Disintegrin domain. N448 carries N-linked (GlcNAc...) asparagine glycosylation. 4 cysteine pairs are disulfide-bonded: C475-C495, C653-C663, C657-C669, and C671-C680. Residues 649–681 (ELQRCLTACHSHGVCNSNHNCHCAPGWAPPFCD) enclose the EGF-like domain. A helical membrane pass occupies residues 702–722 (FLLAMLLSVLLPLLPGAGLAW). The Cytoplasmic segment spans residues 723–813 (CCYRLPGAHL…QVQMPRSCLW (91 aa)). The interval 746–813 (SGPKDGPHRD…QVQMPRSCLW (68 aa)) is disordered. A compositionally biased stretch (basic and acidic residues) spans 780 to 791 (ENSHEPSSHPEK).

The cofactor is Zn(2+). Post-translationally, the precursor is cleaved by a furin endopeptidase. As to expression, expressed in all tissues, except liver, with high expression in placenta, lung, spleen and veins.

The protein localises to the membrane. The protein is Disintegrin and metalloproteinase domain-containing protein 33 (ADAM33) of Homo sapiens (Human).